We begin with the raw amino-acid sequence, 205 residues long: UPF0111 protein YkaA (205 aa).

This sequence belongs to the UPF0111 family.

This chain is UPF0111 protein YkaA (ykaA), found in Bacillus subtilis (strain 168).